Reading from the N-terminus, the 110-residue chain is Acylphosphatase (110 aa).

An Acylphosphatase-like domain is found at 24–110; the sequence is RVRVYVSGRV…SGGARGFEVR (87 aa). Catalysis depends on residues R39 and N57.

Belongs to the acylphosphatase family.

It carries out the reaction an acyl phosphate + H2O = a carboxylate + phosphate + H(+). This chain is Acylphosphatase (acyP), found in Rubrobacter xylanophilus (strain DSM 9941 / JCM 11954 / NBRC 16129 / PRD-1).